The sequence spans 181 residues: Transcription termination/antitermination protein NusG (181 aa).

Residues 130 to 161 (PGELVRVSDGPFADFNGVVEEVDYEKSRLKVS) enclose the KOW domain.

It belongs to the NusG family. Monomer. Interacts with the transcription termination factor Rho and with RNA polymerase.

Its function is as follows. Participates in transcription elongation, termination and antitermination. In the absence of Rho, increases the rate of transcription elongation by the RNA polymerase (RNAP), probably by partially suppressing pausing. In the presence of Rho, modulates most Rho-dependent termination events by interacting with the RNAP to render the complex more susceptible to the termination activity of Rho. May be required to overcome a kinetic limitation of Rho to function at certain terminators. Also involved in ribosomal RNA transcriptional antitermination. The protein is Transcription termination/antitermination protein NusG of Yersinia pestis.